The primary structure comprises 70 residues: MFKFINTLGKLVVKLYFIEAKKLDKKAKADSQRAIELAKQSREKSDAAVSGVHKSAAIAAKAQSMSKFFE.

The chain is Gene 4.3 protein (4.3) from Escherichia coli (Bacteriophage T3).